The chain runs to 934 residues: 2-oxoglutarate dehydrogenase E1 component (934 aa).

This sequence belongs to the alpha-ketoglutarate dehydrogenase family. In terms of assembly, homodimer. Part of the 2-oxoglutarate dehydrogenase (OGDH) complex composed of E1 (2-oxoglutarate dehydrogenase), E2 (dihydrolipoamide succinyltransferase) and E3 (dihydrolipoamide dehydrogenase); the complex contains multiple copies of the three enzymatic components (E1, E2 and E3). Thiamine diphosphate is required as a cofactor.

It carries out the reaction N(6)-[(R)-lipoyl]-L-lysyl-[protein] + 2-oxoglutarate + H(+) = N(6)-[(R)-S(8)-succinyldihydrolipoyl]-L-lysyl-[protein] + CO2. Its function is as follows. E1 component of the 2-oxoglutarate dehydrogenase (OGDH) complex which catalyzes the decarboxylation of 2-oxoglutarate, the first step in the conversion of 2-oxoglutarate to succinyl-CoA and CO(2). This is 2-oxoglutarate dehydrogenase E1 component from Staphylococcus epidermidis (strain ATCC 35984 / DSM 28319 / BCRC 17069 / CCUG 31568 / BM 3577 / RP62A).